The following is a 576-amino-acid chain: Carboxypeptidase S (576 aa).

Residues 1–19 (MIALPVEKAPRKSLWQRHR) lie on the Cytoplasmic side of the membrane. K8 is covalently cross-linked (Glycyl lysine isopeptide (Lys-Gly) (interchain with G-Cter in ubiquitin)). Residues 20–40 (AFISGIVALIIIGTFFLTSGL) form a helical membrane-spanning segment. The Lumenal portion of the chain corresponds to 41–576 (HPAPPHEAKR…EYIVNVNEYA (536 aa)). The tract at residues 44–65 (PPHEAKRPHHGKGPMHSPKCEK) is disordered. An N-linked (GlcNAc...) asparagine glycan is attached at N88. Position 168 (H168) interacts with Zn(2+). Residue D170 is part of the active site. Residue N176 is glycosylated (N-linked (GlcNAc...) asparagine). D205 contributes to the Zn(2+) binding site. N-linked (GlcNAc...) asparagine glycosylation occurs at N228. E239 (proton acceptor) is an active-site residue. E240 and D268 together coordinate Zn(2+). 2 N-linked (GlcNAc...) asparagine glycosylation sites follow: N381 and N525. H547 provides a ligand contact to Zn(2+).

This sequence belongs to the peptidase M20A family. In terms of assembly, yscS is synthesized as one polypeptide chain precursor which after carbohydrate modification in the secretory pathway yields two active precursor molecules. The proteolytically unprocessed forms are associated with the membrane, whereas the mature forms of the enzyme are soluble. It depends on Zn(2+) as a cofactor. Post-translationally, glycosylated. In terms of processing, ubiquitinated. Ubiquitination mediates sorting into internal vesicles in late endosomes. TUL1 is required for ubiquitination.

The protein localises to the vacuole membrane. The catalysed reaction is Release of a C-terminal amino acid from a peptide in which glycine is the penultimate amino acid, e.g. Z-Gly-|-Leu.. Its function is as follows. Necessary for use of certain peptides as sole nitrogen source. May also cleave intracellularly generated peptides to recycle amino acids for protein synthesis. This Saccharomyces cerevisiae (strain ATCC 204508 / S288c) (Baker's yeast) protein is Carboxypeptidase S (CPS1).